Reading from the N-terminus, the 1536-residue chain is Glycogen debranching enzyme (1536 aa).

Catalysis depends on residues aspartate 535, histidine 538, and aspartate 670.

This sequence belongs to the glycogen debranching enzyme family. In terms of assembly, interacts with IGD1.

The protein resides in the mitochondrion. Its subcellular location is the cytoplasm. The catalysed reaction is Transfers a segment of a (1-&gt;4)-alpha-D-glucan to a new position in an acceptor, which may be glucose or a (1-&gt;4)-alpha-D-glucan.. It catalyses the reaction Hydrolysis of (1-&gt;6)-alpha-D-glucosidic branch linkages in glycogen phosphorylase limit dextrin.. Its activity is regulated as follows. Activity is inhibited by IGD1. Multifunctional enzyme acting as 1,4-alpha-D-glucan:1,4-alpha-D-glucan 4-alpha-D-glycosyltransferase and amylo-1,6-glucosidase in glycogen degradation. This is Glycogen debranching enzyme (GDB1) from Saccharomyces cerevisiae (strain ATCC 204508 / S288c) (Baker's yeast).